A 278-amino-acid polypeptide reads, in one-letter code: Putative ABC transporter ATP-binding protein MTBMA_c05830 (278 aa).

Positions 4 to 239 constitute an ABC transporter domain; the sequence is IEAVNIRYTY…IDTIRGADLR (236 aa). 37–44 provides a ligand contact to ATP; that stretch reads GPNGAGKS.

This sequence belongs to the ABC transporter superfamily.

It localises to the cell membrane. Probably part of an ABC transporter complex. Responsible for energy coupling to the transport system. The polypeptide is Putative ABC transporter ATP-binding protein MTBMA_c05830 (Methanothermobacter marburgensis (strain ATCC BAA-927 / DSM 2133 / JCM 14651 / NBRC 100331 / OCM 82 / Marburg) (Methanobacterium thermoautotrophicum)).